The sequence spans 351 residues: Epoxyqueuosine reductase (351 aa).

Catalysis depends on Asp131, which acts as the Proton donor. The 4Fe-4S ferredoxin-type domain maps to Glu177 to Arg205. 8 residues coordinate [4Fe-4S] cluster: Cys185, Cys188, Cys191, Cys195, Cys211, Cys237, Cys240, and Cys244.

It belongs to the QueG family. Monomer. It depends on cob(II)alamin as a cofactor. Requires [4Fe-4S] cluster as cofactor.

It is found in the cytoplasm. It catalyses the reaction epoxyqueuosine(34) in tRNA + AH2 = queuosine(34) in tRNA + A + H2O. It functions in the pathway tRNA modification; tRNA-queuosine biosynthesis. Functionally, catalyzes the conversion of epoxyqueuosine (oQ) to queuosine (Q), which is a hypermodified base found in the wobble positions of tRNA(Asp), tRNA(Asn), tRNA(His) and tRNA(Tyr). The sequence is that of Epoxyqueuosine reductase from Lactococcus garvieae (strain Lg2) (Enterococcus seriolicida).